A 185-amino-acid chain; its full sequence is MINTIKQDAKNRMEKTLSVYLSDVDGIRTGRARASVLDGIVVETYGGRVKLNTISSISVSDNKTLLVKVWDINNVGAIKTAIINSNLGFGFSCEGAVIRLTVPDMTQDMRKNLVKLLGKISEDCRISIRNIRRDIMDKLKIMQDNKDISEDDLRIAGVEIQKITDEIIKKINDTFLAKEKELLHV.

It belongs to the RRF family.

It is found in the cytoplasm. In terms of biological role, responsible for the release of ribosomes from messenger RNA at the termination of protein biosynthesis. May increase the efficiency of translation by recycling ribosomes from one round of translation to another. The chain is Ribosome-recycling factor from Ehrlichia ruminantium (strain Gardel).